A 292-amino-acid polypeptide reads, in one-letter code: Acetyl-coenzyme A carboxylase carboxyl transferase subunit beta (292 aa).

Residues 35–292 (VFSQCEQCNS…LKLHAKKVTS (258 aa)) form the CoA carboxyltransferase N-terminal domain. Zn(2+)-binding residues include C39, C42, C58, and C61. A C4-type zinc finger spans residues 39–61 (CEQCNSAIYNKDLEHNYEVCPYC).

The protein belongs to the AccD/PCCB family. In terms of assembly, acetyl-CoA carboxylase is a heterohexamer composed of biotin carboxyl carrier protein (AccB), biotin carboxylase (AccC) and two subunits each of ACCase subunit alpha (AccA) and ACCase subunit beta (AccD). Zn(2+) serves as cofactor.

It is found in the cytoplasm. The enzyme catalyses N(6)-carboxybiotinyl-L-lysyl-[protein] + acetyl-CoA = N(6)-biotinyl-L-lysyl-[protein] + malonyl-CoA. The protein operates within lipid metabolism; malonyl-CoA biosynthesis; malonyl-CoA from acetyl-CoA: step 1/1. In terms of biological role, component of the acetyl coenzyme A carboxylase (ACC) complex. Biotin carboxylase (BC) catalyzes the carboxylation of biotin on its carrier protein (BCCP) and then the CO(2) group is transferred by the transcarboxylase to acetyl-CoA to form malonyl-CoA. This is Acetyl-coenzyme A carboxylase carboxyl transferase subunit beta from Acholeplasma laidlawii (strain PG-8A).